Here is a 683-residue protein sequence, read N- to C-terminus: Bifunctional lysine-specific demethylase and histidyl-hydroxylase NO66 (683 aa).

Polar residues predominate over residues 1–26; it reads MHKASTSSANRANFQGNHKTQKSPNN. Disordered stretches follow at residues 1-162 and 179-208; these read MHKA…SPIQ and AAGASGASGPAKSCPLPEKRKSLPAGAAKS. Basic and acidic residues predominate over residues 54 to 65; that stretch reads LTKEQKERRKMM. Over residues 85-94 the composition is skewed to polar residues; it reads IDTSASTSNK. The segment covering 95-108 has biased composition (basic residues); it reads GKSKAARPTDRKRR. Residues 116–125 show a composition bias toward low complexity; that stretch reads PADANNNNTK. A Phosphoserine modification is found at serine 152. Phosphothreonine is present on threonine 158. Serine 159 is subject to Phosphoserine. The segment covering 179 to 189 has biased composition (low complexity); that stretch reads AAGASGASGPA. A JmjC domain is found at 341 to 480; sequence NPSTYLVGLR…NLLEKLMPIV (140 aa). Residues histidine 381, aspartate 383, and histidine 446 each contribute to the Fe cation site.

The protein belongs to the ROX family. NO66 subfamily. Fe(2+) serves as cofactor.

It localises to the nucleus. The enzyme catalyses N(6),N(6)-dimethyl-L-lysyl(36)-[histone H3] + 2 2-oxoglutarate + 2 O2 = L-lysyl(36)-[histone H3] + 2 formaldehyde + 2 succinate + 2 CO2. Functionally, oxygenase that can act as both a histone lysine demethylase and a ribosomal histidine hydroxylase. Specifically demethylates 'Lys-4' (H3K4me) and 'Lys-36' (H3K36me) of histone H3, thereby playing a central role in histone code. The protein is Bifunctional lysine-specific demethylase and histidyl-hydroxylase NO66 of Drosophila yakuba (Fruit fly).